The following is a 411-amino-acid chain: Anaerobic nitric oxide reductase flavorubredoxin homolog (411 aa).

Residues 30–210 (LRGSSYNSYL…PFSRLVTPKI (181 aa)) are zinc metallo-hydrolase. Fe cation is bound by residues His79, Glu81, Asp83, His147, Asp166, His227, Cys360, Cys363, Cys393, and Cys396. The region spanning 355–406 (GPRMQCSVCQWIYDPAKGEPMQDVAPGTPWSEVPDNFLCPECSLGKDVFDEL) is the Rubredoxin-like domain.

In the N-terminal section; belongs to the zinc metallo-hydrolase group 3 family. As to quaternary structure, homotetramer. The cofactor is Fe cation.

It localises to the cytoplasm. The protein operates within nitrogen metabolism; nitric oxide reduction. Functionally, anaerobic nitric oxide reductase; uses NADH to detoxify nitric oxide (NO), protecting several 4Fe-4S NO-sensitive enzymes. Has at least 2 reductase partners, only one of which (NorW, flavorubredoxin reductase) has been identified. NO probably binds to the di-iron center. Also able to function as an aerobic oxygen reductase. The protein is Anaerobic nitric oxide reductase flavorubredoxin homolog of Escherichia coli O157:H7.